A 617-amino-acid polypeptide reads, in one-letter code: MPRIPTSVLGKYLLSGQISRQGCVGARQITRHSALPSAAVSVANSARLLHVSSETVPPPPAQPVPLRKQLKDEAKKAKKQGKKKSKGDSQTVDGWELTVGIEIHAQLNTARKLFSPAVTSFNDEPNSHVALFDLSMPGSQPLFQKETLIPALRAALALNCDIQKLSRFDRKHYFWWDQPSGYQITQYYEPFARNGHITLLARDGISPQDGESVTIGIKQVQLEQDTAKTLAQADKVNWLDFNRVGVPLIEIITEPEMHHPRTAAVLVRKIQMLLNTVDACVSGMETGGLRADVNVSVRRTDGSNPSLGTRTEIKNLSTIKAVEDAIIAERDRQISELEAGRAIPSETRGWTLGSNETRRLRGKEGEVDYRYMPDPDIAPLVIGDDLVDHLRRSLAVSPDSELDTLIARYGLTAKDALSLINLENGSRVQYFYKVLKSVEEKLAAELTEEEMPEFKSYSTLVGNWIIHELGRLTTFKAGPLAARDLSFTPEGDCLQVPDADLAQLLYHLVRKQITGKVAKELLFAIYLNEIEGGITQAIEDNDLWFKEIPEEEYEKLADEVMEGEDKVLQEFVDYKQFPQGKLMYLVGKMMRLGPTERIVPANAERVMRAKVEKLRSE.

The transit peptide at 1-56 (MPRIPTSVLGKYLLSGQISRQGCVGARQITRHSALPSAAVSVANSARLLHVSSETV) directs the protein to the mitochondrion. The interval 53 to 90 (SETVPPPPAQPVPLRKQLKDEAKKAKKQGKKKSKGDSQ) is disordered. The segment covering 76-85 (KAKKQGKKKS) has biased composition (basic residues).

Belongs to the GatB/GatE family. GatB subfamily. As to quaternary structure, subunit of the heterotrimeric GatCAB amidotransferase (AdT) complex, composed of A, B and C subunits.

It is found in the mitochondrion. The enzyme catalyses L-glutamyl-tRNA(Gln) + L-glutamine + ATP + H2O = L-glutaminyl-tRNA(Gln) + L-glutamate + ADP + phosphate + H(+). In terms of biological role, allows the formation of correctly charged Gln-tRNA(Gln) through the transamidation of misacylated Glu-tRNA(Gln) in the mitochondria. The reaction takes place in the presence of glutamine and ATP through an activated gamma-phospho-Glu-tRNA(Gln). In Fusarium vanettenii (strain ATCC MYA-4622 / CBS 123669 / FGSC 9596 / NRRL 45880 / 77-13-4) (Fusarium solani subsp. pisi), this protein is Glutamyl-tRNA(Gln) amidotransferase subunit B, mitochondrial.